The primary structure comprises 222 residues: MSSLSKEAALVHEALVARGLETPLRPPVHEMDNETRKRLISGHMTEIMQLLNLDLSDDSLMETPHRIAKMYVDEIFSGLDYANFPKITVIENKMKVDEMVTVRDITLTSTCEHHFVTIDGKATVAYIPKDSVIGLSKINRIVQFFAQRPQVQERLTQQILTALQTLLGTNNVAVSIDAVHYCVKARGIRDATSATTTTSLGGLFKSSQNTRQEFLRAVRHHN.

3 residues coordinate Zn(2+): Cys-111, His-114, and Cys-182.

This sequence belongs to the GTP cyclohydrolase I family. Toroid-shaped homodecamer, composed of two pentamers of five dimers.

The enzyme catalyses GTP + H2O = 7,8-dihydroneopterin 3'-triphosphate + formate + H(+). It functions in the pathway cofactor biosynthesis; 7,8-dihydroneopterin triphosphate biosynthesis; 7,8-dihydroneopterin triphosphate from GTP: step 1/1. The protein is GTP cyclohydrolase 1 of Citrobacter koseri (strain ATCC BAA-895 / CDC 4225-83 / SGSC4696).